Here is a 398-residue protein sequence, read N- to C-terminus: Selection and upkeep of intraepithelial T-cells protein 8 (398 aa).

The N-terminal stretch at 1-25 (MMKPEFSHFFGFCVYFLFLQVMASS) is a signal peptide. The Ig-like V-type domain occupies 26–141 (EKLRVTTPTR…DVAIMNLNVT (116 aa)). Residues 26–244 (EKLRVTTPTR…ANELFNQDYL (219 aa)) are Extracellular-facing. A disulfide bridge connects residues cysteine 49 and cysteine 123. Residues asparagine 92 and asparagine 139 are each glycosylated (N-linked (GlcNAc...) asparagine). The 92-residue stretch at 142-233 (AVGLETEIHV…TGEEKQTSII (92 aa)) folds into the Ig-like C1-type domain. A disulfide bridge connects residues cysteine 163 and cysteine 217. Residues 245-265 (WVGIFPFSVLSLILFGVLPFI) form a helical membrane-spanning segment. Residues 266–288 (NSFFRSQGCASGCLSKCLPVVTS) lie on the Cytoplasmic side of the membrane. A helical transmembrane segment spans residues 289-309 (WPVQIVHFLVCSGVLFAVYLP). Residues 310–331 (HRYRVSLSDPQFPLYNNWITEL) lie on the Extracellular side of the membrane. Residues 332–352 (LIVILFLTICFVLPITVLLLI) form a helical membrane-spanning segment. Residues 353–398 (KLSPTCLAKWEKNKDDIMDSQLGLGKAREASTLYEEQSRKSWEQEK) are Cytoplasmic-facing.

The protein belongs to the SKINT family. As to expression, expressed in skin, thymus, testis and, to a lower extent, bladder, brain, heart, kidney, mammary gland, small intestine and uterus.

Its subcellular location is the membrane. Functionally, may act by engaging a cell surface molecule on immature T-cells in the embryonic thymus. This is Selection and upkeep of intraepithelial T-cells protein 8 (Skint8) from Mus musculus (Mouse).